The following is a 127-amino-acid chain: Major sperm protein 78 (127 aa).

Residue Ala-2 is modified to N-acetylalanine. Residues 9–126 form the MSP domain; sequence DIQTQPGTKI…RRKNLPIEYN (118 aa).

In terms of tissue distribution, sperm.

It localises to the cell projection. It is found in the pseudopodium. The protein resides in the cytoplasm. Its subcellular location is the cytoskeleton. In terms of biological role, central component in molecular interactions underlying sperm crawling. Forms an extensive filament system that extends from sperm villipoda, along the leading edge of the pseudopod. This Caenorhabditis elegans protein is Major sperm protein 78 (msp-78).